The following is an 87-amino-acid chain: Translation initiation factor IF-1 2 (87 aa).

The region spanning 1 to 72 is the S1-like domain; it reads MAKEELIELN…TKGRINFRHK (72 aa). Residues 66–87 form a disordered region; the sequence is RINFRHKDERSGPPSRPPQHRR.

This sequence belongs to the IF-1 family. In terms of assembly, component of the 30S ribosomal translation pre-initiation complex which assembles on the 30S ribosome in the order IF-2 and IF-3, IF-1 and N-formylmethionyl-tRNA(fMet); mRNA recruitment can occur at any time during PIC assembly.

It localises to the cytoplasm. One of the essential components for the initiation of protein synthesis. Stabilizes the binding of IF-2 and IF-3 on the 30S subunit to which N-formylmethionyl-tRNA(fMet) subsequently binds. Helps modulate mRNA selection, yielding the 30S pre-initiation complex (PIC). Upon addition of the 50S ribosomal subunit IF-1, IF-2 and IF-3 are released leaving the mature 70S translation initiation complex. The polypeptide is Translation initiation factor IF-1 2 (Bordetella parapertussis (strain 12822 / ATCC BAA-587 / NCTC 13253)).